The primary structure comprises 658 residues: MSGVTARMENSIITTDSGILFFDQNWTQVSSGGHQFQHISAFAYDEVKQKLYFSDLKDPKFRIFSLDANPQEEYHKVTKLLPKSDETAYITGLVFDHLERKLYWTERGTHALYSVEVDKIGNGTDAGSLISTVTKVEDNHDLAGLAIDECRRHLYWTNSYLQTSNVVRATMAGKVLNSHTEDVYEPKGIAVDHYSNRIYWVEKKFGRAFSIQSVNLEVEDVKTFISENDKAPTHVALNSRYLYWVDQQVGEVHETLKSDSTQSRVVYRGNRPTAIIIKSALLLNHQNNNPSCKSVIAKILDNVKRESEGELPQADKPTSAKPEMIICLNNGILNHNTNSCICLPEYQGNFCEIPICNNYCVHGKCVIGRDNRPTCECDAKFEGERCDRSKCDGFCLNSGNCSFSDATATCACPKNFSGKRCETAICTSDYCYNGRCMVEEGGSPKCQCNVGYRGERCEEYTCNNYCLNDGKCVLNNETMLVECRCGAEYTGKRCEIPKRFCSLDTGNPELQPYCDGIPLSSQQQQQQLVEPQISYCKNSFNRTVVYASLAFAASLFILMVILLIVRRFYEEGRPRITKRFKVTSNHTQMTSRPATQCEITIENCCNMNVCETPCFDTNLLQKSSSKAEDKQYLLDDIENIAGSYRKLPSCAGGDKNLP.

The Extracellular segment spans residues 1-543 (MSGVTARMEN…SYCKNSFNRT (543 aa)). Asparagine 25 and asparagine 122 each carry an N-linked (GlcNAc...) asparagine glycan. LDL-receptor class B repeat units lie at residues 100 to 142 (RKLY…NHDL), 152 to 195 (RHLY…DHYS), and 196 to 241 (NRIY…NSRY). EGF-like domains lie at 352 to 384 (EIPICNNYCVHGKCVIGRDNRPTCECDAKFEGE), 387 to 422 (DRSKCDGFCLNSGNCSFSDATATCACPKNFSGKRCE), and 458 to 495 (EEYTCNNYCLNDGKCVLNNETMLVECRCGAEYTGKRCE). 8 disulfide bridges follow: cysteine 356/cysteine 365, cysteine 360/cysteine 375, cysteine 391/cysteine 401, cysteine 395/cysteine 410, cysteine 412/cysteine 421, cysteine 462/cysteine 472, cysteine 466/cysteine 483, and cysteine 485/cysteine 494. Residues asparagine 400 and asparagine 415 are each glycosylated (N-linked (GlcNAc...) asparagine). Asparagine 476 carries N-linked (GlcNAc...) asparagine glycosylation. A glycan (N-linked (GlcNAc...) asparagine) is linked at asparagine 541. A helical transmembrane segment spans residues 544–564 (VVYASLAFAASLFILMVILLI). At 565 to 658 (VRRFYEEGRP…SCAGGDKNLP (94 aa)) the chain is on the cytoplasmic side.

The protein belongs to the cueball family.

Its subcellular location is the cell membrane. Has a role in spermatogenesis and oogenesis. This is Protein cueball from Culex quinquefasciatus (Southern house mosquito).